We begin with the raw amino-acid sequence, 171 residues long: Auxin-responsive protein IAA33 (171 aa).

Composition is skewed to polar residues over residues Met1–Ser11 and Asp19–Pro32. Positions Met1–Ala51 are disordered. Residues Lys40 to Ser49 show a composition bias toward low complexity. The region spanning Val72–Gly162 is the PB1 domain.

Belongs to the Aux/IAA family. In terms of assembly, homodimers and heterodimers.

The protein localises to the nucleus. Functionally, aux/IAA proteins are short-lived transcriptional factors that function as repressors of early auxin response genes at low auxin concentrations. Repression is thought to result from the interaction with auxin response factors (ARFs), proteins that bind to the auxin-responsive promoter element (AuxRE). Formation of heterodimers with ARF proteins may alter their ability to modulate early auxin response genes expression. The polypeptide is Auxin-responsive protein IAA33 (IAA33) (Arabidopsis thaliana (Mouse-ear cress)).